The following is a 121-amino-acid chain: Prefoldin subunit beta (121 aa).

It belongs to the prefoldin subunit beta family. In terms of assembly, heterohexamer of two alpha and four beta subunits.

The protein localises to the cytoplasm. In terms of biological role, molecular chaperone capable of stabilizing a range of proteins. Seems to fulfill an ATP-independent, HSP70-like function in archaeal de novo protein folding. In Caldivirga maquilingensis (strain ATCC 700844 / DSM 13496 / JCM 10307 / IC-167), this protein is Prefoldin subunit beta.